Reading from the N-terminus, the 497-residue chain is Cytochrome P450 2D6 (497 aa).

Asp-301 provides a ligand contact to substrate. Cys-443 provides a ligand contact to heme.

It belongs to the cytochrome P450 family. Requires heme as cofactor.

Its subcellular location is the endoplasmic reticulum membrane. It localises to the microsome membrane. It carries out the reaction (5Z,8Z,11Z,14Z)-eicosatetraenoate + reduced [NADPH--hemoprotein reductase] + O2 = (8R,9S)-epoxy-(5Z,11Z,14Z)-eicosatrienoate + oxidized [NADPH--hemoprotein reductase] + H2O + H(+). It catalyses the reaction (5Z,8Z,11Z,14Z)-eicosatetraenoate + reduced [NADPH--hemoprotein reductase] + O2 = (11R,12S)-epoxy-(5Z,8Z,14Z)-eicosatrienoate + oxidized [NADPH--hemoprotein reductase] + H2O + H(+). The catalysed reaction is (5Z,8Z,11Z,14Z)-eicosatetraenoate + reduced [NADPH--hemoprotein reductase] + O2 = (14S,15R)-epoxy-(5Z,8Z,11Z)-eicosatrienoate + oxidized [NADPH--hemoprotein reductase] + H2O + H(+). The enzyme catalyses N-(5Z,8Z,11Z,14Z-eicosatetraenoyl)-ethanolamine + reduced [NADPH--hemoprotein reductase] + O2 = N-(8,9-epoxy-5Z,11Z,14Z-eicosatrienoyl)-ethanolamine + oxidized [NADPH--hemoprotein reductase] + H2O + H(+). It carries out the reaction N-(5Z,8Z,11Z,14Z-eicosatetraenoyl)-ethanolamine + reduced [NADPH--hemoprotein reductase] + O2 = N-(11,12-epoxy-5Z,8Z,14Z-eicosatrienoyl)-ethanolamine + oxidized [NADPH--hemoprotein reductase] + H2O + H(+). It catalyses the reaction N-(5Z,8Z,11Z,14Z-eicosatetraenoyl)-ethanolamine + reduced [NADPH--hemoprotein reductase] + O2 = N-(14,15-epoxy-5Z,8Z,11Z-eicosatrienoyl)-ethanolamine + oxidized [NADPH--hemoprotein reductase] + H2O + H(+). The catalysed reaction is N-(5Z,8Z,11Z,14Z-eicosatetraenoyl)-ethanolamine + reduced [NADPH--hemoprotein reductase] + O2 = N-(20-hydroxy-5Z,8Z,11Z,14Z-eicosatetraenoyl)-ethanolamine + oxidized [NADPH--hemoprotein reductase] + H2O + H(+). The enzyme catalyses (5Z,8Z,11Z,14Z,17Z)-eicosapentaenoate + reduced [NADPH--hemoprotein reductase] + O2 = (17S,18R)-epoxy-(5Z,8Z,11Z,14Z)-eicosatetraenoate + oxidized [NADPH--hemoprotein reductase] + H2O + H(+). It carries out the reaction (4Z,7Z,10Z,13Z,16Z,19Z)-docosahexaenoate + reduced [NADPH--hemoprotein reductase] + O2 = (19R,20S)-epoxy-(4Z,7Z,10Z,13Z,16Z)-docosapentaenoate + oxidized [NADPH--hemoprotein reductase] + H2O + H(+). It catalyses the reaction (4Z,7Z,10Z,13Z,16Z,19Z)-docosahexaenoate + reduced [NADPH--hemoprotein reductase] + O2 = (19S,20R)-epoxy-(4Z,7Z,10Z,13Z,16Z)-docosapentaenoate + oxidized [NADPH--hemoprotein reductase] + H2O + H(+). The catalysed reaction is cholesterol + reduced [NADPH--hemoprotein reductase] + O2 = 25-hydroxycholesterol + oxidized [NADPH--hemoprotein reductase] + H2O + H(+). The enzyme catalyses all-trans-retinol + reduced [NADPH--hemoprotein reductase] + O2 = all-trans-retinal + oxidized [NADPH--hemoprotein reductase] + 2 H2O + H(+). It participates in cofactor metabolism; retinol metabolism. The protein operates within lipid metabolism; fatty acid metabolism. It functions in the pathway steroid metabolism; cholesterol metabolism. Its function is as follows. A cytochrome P450 monooxygenase involved in the metabolism of fatty acids, steroids and retinoids. Mechanistically, uses molecular oxygen inserting one oxygen atom into a substrate, and reducing the second into a water molecule, with two electrons provided by NADPH via cytochrome P450 reductase (NADPH--hemoprotein reductase). Catalyzes the epoxidation of double bonds of polyunsaturated fatty acids (PUFA). Metabolizes endocannabinoid arachidonoylethanolamide (anandamide) to 20-hydroxyeicosatetraenoic acid ethanolamide (20-HETE-EA) and 8,9-, 11,12-, and 14,15-epoxyeicosatrienoic acid ethanolamides (EpETrE-EAs), potentially modulating endocannabinoid system signaling. Catalyzes the hydroxylation of carbon-hydrogen bonds. Metabolizes cholesterol toward 25-hydroxycholesterol, a physiological regulator of cellular cholesterol homeostasis. Catalyzes the oxidative transformations of all-trans retinol to all-trans retinal, a precursor for the active form all-trans-retinoic acid. Also involved in the oxidative metabolism of drugs such as antiarrhythmics, adrenoceptor antagonists, and tricyclic antidepressants. This chain is Cytochrome P450 2D6 (CYP2D6), found in Pan paniscus (Pygmy chimpanzee).